Reading from the N-terminus, the 348-residue chain is Mamu class I histocompatibility antigen, alpha chain F (348 aa).

The signal sequence occupies residues 1–21 (MAPRTLLLVLSGALALTETWA). Residues 22 to 113 (GSHSLRYFST…LLLRYNQSEA (92 aa)) are alpha-1. The Extracellular portion of the chain corresponds to 22-307 (GSHSLRYFST…ESSSQPTIPI (286 aa)). N-linked (GlcNAc...) asparagine glycosylation occurs at Asn-109. The tract at residues 114 to 205 (GSHTLQGMNG…ENGKETLQRA (92 aa)) is alpha-2. Cystine bridges form between Cys-124-Cys-187 and Cys-226-Cys-282. Residues 206–297 (DPPKAHVAHH…GLPQPLTLRW (92 aa)) form an alpha-3 region. The 89-residue stretch at 208–296 (PKAHVAHHPI…EGLPQPLTLR (89 aa)) folds into the Ig-like C1-type domain. Residues 298 to 307 (ESSSQPTIPI) form a connecting peptide region. A helical transmembrane segment spans residues 308–331 (VGIVAGLAVLAVVVTGAVVAAVMW). At 332-348 (RRKSSDRNRGSYSQPTM) the chain is on the cytoplasmic side.

This sequence belongs to the MHC class I family. Heterodimer of an alpha chain and a beta chain (beta-2-microglobulin).

The protein localises to the membrane. Involved in the presentation of foreign antigens to the immune system. This Macaca mulatta (Rhesus macaque) protein is Mamu class I histocompatibility antigen, alpha chain F (Mamu-F).